We begin with the raw amino-acid sequence, 333 residues long: Probable pyridoxal reductase 2 (333 aa).

The active-site Proton donor is the Y52.

Belongs to the aldo/keto reductase family.

Its subcellular location is the cytoplasm. The enzyme catalyses pyridoxine + NADP(+) = pyridoxal + NADPH + H(+). In terms of biological role, catalyzes the reduction of pyridoxal (PL) with NADPH and oxidation of pyridoxine (PN) with NADP(+). The sequence is that of Probable pyridoxal reductase 2 from Schizosaccharomyces pombe (strain 972 / ATCC 24843) (Fission yeast).